Reading from the N-terminus, the 788-residue chain is Protein kintoun (788 aa).

Disordered stretches follow at residues 194-249 (LRKP…SEQD), 415-438 (NNSE…EISP), and 628-754 (HKEH…SSSV). The span at 225-241 (GKEKKDQKRVIKEEHKQ) shows a compositional bias: basic and acidic residues. The span at 417–427 (SEGLTSESNLD) shows a compositional bias: polar residues. Composition is skewed to basic and acidic residues over residues 628-644 (HKEH…DVGV) and 667-682 (ENTE…RYEE). Polar residues-rich tracts occupy residues 685–701 (STSC…QKDS) and 744–754 (NFDSRPASSSV).

This sequence belongs to the PIH1 family. Kintoun subfamily.

It is found in the cytoplasm. The protein resides in the dynein axonemal particle. Functionally, required for cytoplasmic pre-assembly of axonemal dyneins, thereby playing a central role in motility in cilia and flagella. Involved in pre-assembly of dynein arm complexes in the cytoplasm before intraflagellar transport loads them for the ciliary compartment. The sequence is that of Protein kintoun from Xenopus laevis (African clawed frog).